Reading from the N-terminus, the 355-residue chain is Molybdenum import ATP-binding protein ModC (355 aa).

The ABC transporter domain occupies 1–233; it reads MTLIVEAKQR…PSAAADRKEA (233 aa). ATP is bound at residue 31–38; the sequence is GRSGSGKT. Residues 291 to 355 form the Mop domain; that stretch reads GLSALNILEG…AIIKTVALEG (65 aa).

The protein belongs to the ABC transporter superfamily. Molybdate importer (TC 3.A.1.8) family. As to quaternary structure, the complex is composed of two ATP-binding proteins (ModC), two transmembrane proteins (ModB) and a solute-binding protein (ModA).

The protein resides in the cell inner membrane. It catalyses the reaction molybdate(out) + ATP + H2O = molybdate(in) + ADP + phosphate + H(+). Part of the ABC transporter complex ModABC involved in molybdenum import. Responsible for energy coupling to the transport system. This is Molybdenum import ATP-binding protein ModC from Rhizobium etli (strain ATCC 51251 / DSM 11541 / JCM 21823 / NBRC 15573 / CFN 42).